Reading from the N-terminus, the 142-residue chain is Hemoglobin subunit alpha 1 (142 aa).

Ser-1 carries the post-translational modification N-acetylserine. The Globin domain occupies 1-142 (SLSDKDKAAV…VSLALSERYR (142 aa)). His-59 lines the O2 pocket. His-88 serves as a coordination point for heme b.

It belongs to the globin family. In terms of assembly, hb1 is a heterotetramer of two alpha-1 chains and two beta-1 chains. Hb2 is a heterotetramer of two alpha-2 chains and two beta-1 chains. HbC is a heterotetramer of two alpha-1 chains and two beta-2 chains. Red blood cells.

Functionally, involved in oxygen transport from gills to the various peripheral tissues. This Eleginops maclovinus (Patagonian blennie) protein is Hemoglobin subunit alpha 1.